The chain runs to 155 residues: Deoxyuridine 5'-triphosphate nucleotidohydrolase (155 aa).

Substrate-binding positions include 74 to 76, N87, and 91 to 93; these read RSG and LID.

This sequence belongs to the dUTPase family. Mg(2+) serves as cofactor.

It catalyses the reaction dUTP + H2O = dUMP + diphosphate + H(+). It functions in the pathway pyrimidine metabolism; dUMP biosynthesis; dUMP from dCTP (dUTP route): step 2/2. Functionally, this enzyme is involved in nucleotide metabolism: it produces dUMP, the immediate precursor of thymidine nucleotides and it decreases the intracellular concentration of dUTP so that uracil cannot be incorporated into DNA. This Xanthomonas oryzae pv. oryzae (strain PXO99A) protein is Deoxyuridine 5'-triphosphate nucleotidohydrolase.